The sequence spans 231 residues: MKLDVVTIFPEYLEPLRTALLGKAIDKGLISVDVHDLRRWTHDVHKSVDDAPYGGGPGMVMKPTVWGDALDAVCPDDALLVVPTPAGVPFTQATAQRWAAERHLVFACGRYEGIDQRVFDDAARRVRVEEVSIGDYVLIGGEAAVLVMVEAVVRLLPGVLGNQQSHEQDSFSDGLLEGPSYTRPVSWRGLEVPPILLSGDHAKVAAWRREQSLARTRERRPDLLPPESSSD.

S-adenosyl-L-methionine-binding positions include Gly-109 and 133–138 (IGDYVL).

This sequence belongs to the RNA methyltransferase TrmD family. As to quaternary structure, homodimer.

It localises to the cytoplasm. The catalysed reaction is guanosine(37) in tRNA + S-adenosyl-L-methionine = N(1)-methylguanosine(37) in tRNA + S-adenosyl-L-homocysteine + H(+). In terms of biological role, specifically methylates guanosine-37 in various tRNAs. The protein is tRNA (guanine-N(1)-)-methyltransferase of Nocardia farcinica (strain IFM 10152).